A 226-amino-acid chain; its full sequence is Small ribosomal subunit protein uS3 (226 aa).

Residues 36–104 (IRKYLENRLS…KIQINIFEIK (69 aa)) form the KH type-2 domain.

The protein belongs to the universal ribosomal protein uS3 family. Part of the 30S ribosomal subunit. Forms a tight complex with proteins S10 and S14.

Binds the lower part of the 30S subunit head. Binds mRNA in the 70S ribosome, positioning it for translation. This chain is Small ribosomal subunit protein uS3, found in Karelsulcia muelleri (strain GWSS) (Sulcia muelleri).